The primary structure comprises 37 residues: Large ribosomal subunit protein bL36 (37 aa).

It belongs to the bacterial ribosomal protein bL36 family.

This chain is Large ribosomal subunit protein bL36, found in Dictyoglomus thermophilum (strain ATCC 35947 / DSM 3960 / H-6-12).